The sequence spans 126 residues: Mating-type protein A1 (126 aa).

The homeobox DNA-binding region spans 70–126 (SPKGKSSISPQARAFLEQVFRRKQSLNSKEKEEVAKKCGITPLQVRVWFINKRMRSK).

It belongs to the MATA1 family. As to quaternary structure, binds DNA with a high specificity as a heterodimer of A1 and ALPHA2.

Its subcellular location is the nucleus. In terms of biological role, mating type proteins are sequence specific DNA-binding proteins that act as master switches in yeast differentiation by controlling gene expression in a cell type-specific fashion. Transcriptional corepressor that, in a/alpha diploid cells, binds cooperatively with the ALPHA2 protein to a 21-bp DNA sequence termed the haploid-specific gene (hsg) operator, to repress transcription of haploid-specific genes and of MATALPHA1. The protein is Mating-type protein A1 (MATA1) of Saccharomyces cerevisiae (Baker's yeast).